The following is a 390-amino-acid chain: MREELKGIFASVFGEKEGLRFFFAPGRVNLIGEHTDYNGGHVFPCALTMGTYAAVAERNDGLVRMYSDNFRNAGIKECSLDDIRYQKEDDWANYPKGVIYEFQQRGYAVPHGFDIVFSGNIPNGAGLSSSASIELLMGVVLQSYFHPEVDALELVKMAQHAENHFIGVNCGIMDQFAIGMGKKHHAMLLNCDTLDYEYSKLNVSGLALVIANTNKKRTLADSSYNTRRQECNDALLDLKKGLDIAALGDIKPSDFDAHSSLIQNETNRRRAKHAVYENHRAIKTAHMFKENNIDEIGQLMKESHLSLKDDYEVTCPELDELVFAAWDHEGVIGSRMTGAGFGGCTISIVKDEFVDDFIQKVGDRYQEKTGLRADFYVADIGEGARELKGE.

33–36 (EHTD) provides a ligand contact to substrate. ATP is bound by residues Ser-67 and 124–130 (GAGLSSS). Mg(2+) contacts are provided by Ser-130 and Glu-162. The Proton acceptor role is filled by Asp-174. Residue Tyr-224 coordinates substrate.

It belongs to the GHMP kinase family. GalK subfamily.

The protein localises to the cytoplasm. The enzyme catalyses alpha-D-galactose + ATP = alpha-D-galactose 1-phosphate + ADP + H(+). Its pathway is carbohydrate metabolism; galactose metabolism. Functionally, catalyzes the transfer of the gamma-phosphate of ATP to D-galactose to form alpha-D-galactose-1-phosphate (Gal-1-P). The sequence is that of Galactokinase from Bacillus subtilis (strain 168).